The sequence spans 808 residues: Receptor like protein 27 (808 aa).

The first 31 residues, 1–31, serve as a signal peptide directing secretion; the sequence is MLFFIKVFMKTILSVLLLFFIFASSFTLVVG. The Extracellular portion of the chain corresponds to 32–740; sequence LAGCRPDQIQ…DEDEEVLNWK (709 aa). Asn-56, Asn-68, Asn-90, Asn-103, Asn-108, Asn-144, and Asn-167 each carry an N-linked (GlcNAc...) asparagine glycan. LRR repeat units follow at residues 96-120, 122-144, 145-170, 172-192, 193-218, 220-241, 242-265, 266-291, 293-314, 315-338, 340-363, and 364-387; these read LQHL…GFGN, NRLE…SFSN, LSQL…NLTK, SILV…LLTL, PFLS…STSS, LEFM…ISKL, INLK…LFSS, FKSL…SKIP, NLEN…LKNL, TKLE…FWNL, RLRR…VLVN, and SSVR…PLSI. Asn-213 carries N-linked (GlcNAc...) asparagine glycosylation. A glycan (N-linked (GlcNAc...) asparagine) is linked at Asn-313. N-linked (GlcNAc...) asparagine glycosylation is present at Asn-363. The LRR 13; degenerate repeat unit spans residues 388-407; that stretch reads NLLSAWNNSFTGNIPLETCN. Asn-394, Asn-407, and Asn-420 each carry an N-linked (GlcNAc...) asparagine glycan. 10 LRR repeats span residues 408 to 434, 436 to 456, 457 to 481, 483 to 504, 505 to 529, 532 to 556, 601 to 625, 626 to 649, 650 to 673, and 675 to 698; these read RSSL…DFQE, LIVV…IFSD, GALL…LLNC, MLRF…WLKA, LPDL…DRGP, FPKL…YFVN, LTSY…IGLL, KALI…LANV, TELE…LKTL, and FLAY…QITG. Asn-480 is a glycosylation site (N-linked (GlcNAc...) asparagine). The N-linked (GlcNAc...) asparagine glycan is linked to Asn-544. N-linked (GlcNAc...) asparagine glycans are attached at residues Asn-632 and Asn-648. Residues 741-761 form a helical membrane-spanning segment; it reads AVVIGYWPGLLLGLIMAHVIA. Over 762 to 808 the chain is Cytoplasmic; that stretch reads SFKPKWLVKIVGPEKRKEDNPVRLFMTLDSRWDSFNNKKNVEQKSDM.

It belongs to the RLP family.

Its subcellular location is the cell membrane. The protein is Receptor like protein 27 of Arabidopsis thaliana (Mouse-ear cress).